The following is a 211-amino-acid chain: Large ribosomal subunit protein uL3 (211 aa).

A compositionally biased stretch (polar residues) spans 130-139 (QDATHGNSLS). Residues 130 to 151 (QDATHGNSLSHRAPGSIGQNQT) are disordered. N5-methylglutamine is present on glutamine 150.

Belongs to the universal ribosomal protein uL3 family. In terms of assembly, part of the 50S ribosomal subunit. Forms a cluster with proteins L14 and L19. Methylated by PrmB.

In terms of biological role, one of the primary rRNA binding proteins, it binds directly near the 3'-end of the 23S rRNA, where it nucleates assembly of the 50S subunit. This is Large ribosomal subunit protein uL3 from Alcanivorax borkumensis (strain ATCC 700651 / DSM 11573 / NCIMB 13689 / SK2).